We begin with the raw amino-acid sequence, 189 residues long: Protein GrpE (189 aa).

The span at 1–12 (MDKKKHGSHAGA) shows a compositional bias: basic residues. The interval 1 to 36 (MDKKKHGSHAGAHHTDEPAAETVAPAAEGAPAAADR) is disordered. Positions 20–34 (AETVAPAAEGAPAAA) are enriched in low complexity.

The protein belongs to the GrpE family. As to quaternary structure, homodimer.

Its subcellular location is the cytoplasm. Participates actively in the response to hyperosmotic and heat shock by preventing the aggregation of stress-denatured proteins, in association with DnaK and GrpE. It is the nucleotide exchange factor for DnaK and may function as a thermosensor. Unfolded proteins bind initially to DnaJ; upon interaction with the DnaJ-bound protein, DnaK hydrolyzes its bound ATP, resulting in the formation of a stable complex. GrpE releases ADP from DnaK; ATP binding to DnaK triggers the release of the substrate protein, thus completing the reaction cycle. Several rounds of ATP-dependent interactions between DnaJ, DnaK and GrpE are required for fully efficient folding. In Geobacter metallireducens (strain ATCC 53774 / DSM 7210 / GS-15), this protein is Protein GrpE.